The primary structure comprises 419 residues: Gamma-glutamyl phosphate reductase (419 aa).

It belongs to the gamma-glutamyl phosphate reductase family.

The protein resides in the cytoplasm. It catalyses the reaction L-glutamate 5-semialdehyde + phosphate + NADP(+) = L-glutamyl 5-phosphate + NADPH + H(+). It functions in the pathway amino-acid biosynthesis; L-proline biosynthesis; L-glutamate 5-semialdehyde from L-glutamate: step 2/2. Its function is as follows. Catalyzes the NADPH-dependent reduction of L-glutamate 5-phosphate into L-glutamate 5-semialdehyde and phosphate. The product spontaneously undergoes cyclization to form 1-pyrroline-5-carboxylate. This chain is Gamma-glutamyl phosphate reductase, found in Nitratidesulfovibrio vulgaris (strain DP4) (Desulfovibrio vulgaris).